The sequence spans 501 residues: Dye-decolorizing peroxidase (501 aa).

The first 21 residues, 1 to 21 (MRLSPSFLSLALVIFVGEVVA), serve as a signal peptide directing secretion. A propeptide spanning residues 22–60 (RNVVARASNPASVTGTRKVSLLKNVAGLPAVPTAQQVAV) is cleaved from the precursor. Aspartate 228 functions as the Proton acceptor in the catalytic mechanism. Asparagine 352 carries N-linked (GlcNAc...) asparagine glycosylation. Position 367 (histidine 367) interacts with heme. Asparagine 403 carries an N-linked (GlcNAc...) asparagine glycan.

This sequence belongs to the DyP-type peroxidase family. The cofactor is heme b.

The protein localises to the secreted. It catalyses the reaction Reactive Blue 5 + 2 H2O2 = 2,2'-disulfonyl azobenzene + 3-[(4-amino-6-chloro-1,3,5-triazin-2-yl)amino]benzenesulfonate + phthalate + 2 H2O + 2 H(+). The catalysed reaction is 2 a phenolic donor + H2O2 = 2 a phenolic radical donor + 2 H2O. Functionally, manganese-independent peroxidase that is able to convert a large number of compounds, but its physiological substrate is not known. In addition to classic peroxidase substrates (e.g. 2,6-dimethoxyphenol), oxidizes dyes such as Reactive Blue 5 and Reactive Black 5. This chain is Dye-decolorizing peroxidase, found in Exidia glandulosa (Black witch's butter).